The primary structure comprises 254 residues: Protein PET122, mitochondrial (254 aa).

Residues 1 to 8 (MLTITKRL) constitute a mitochondrion transit peptide. Positions 185–254 (QAAALALFGR…IKRRGFEINT (70 aa)) are essential for PET122 function.

It is found in the mitochondrion inner membrane. In terms of biological role, required for expression of the mitochondrial gene for cytochrome c oxidase subunit 3 (COX3). PET122 seems to work by directly interacting with the small ribosomal subunit to promote translation initiation on the COX3 mRNA. This chain is Protein PET122, mitochondrial (PET122), found in Saccharomyces cerevisiae (strain ATCC 204508 / S288c) (Baker's yeast).